Consider the following 155-residue polypeptide: Regulatory protein RecX (155 aa).

The protein belongs to the RecX family.

It localises to the cytoplasm. Functionally, modulates RecA activity. This is Regulatory protein RecX from Pseudomonas fluorescens (strain ATCC BAA-477 / NRRL B-23932 / Pf-5).